Consider the following 348-residue polypeptide: UPF0283 membrane protein HAPS_0079 (348 aa).

3 consecutive transmembrane segments (helical) span residues 57 to 77 (FLAA…QWLI), 86 to 106 (IYFA…GAII), and 203 to 223 (ENAI…MVAW).

The protein belongs to the UPF0283 family.

It is found in the cell inner membrane. The protein is UPF0283 membrane protein HAPS_0079 of Glaesserella parasuis serovar 5 (strain SH0165) (Haemophilus parasuis).